A 1346-amino-acid chain; its full sequence is Adhesion G protein-coupled receptor A3 (1346 aa).

The N-terminal stretch at 1-21 is a signal peptide; it reads MSVLCVLLLAFVLPLRGSSSA. The interval 18 to 45 is disordered; the sequence is SSSAGSTECKTYDERSRSAGKSSPSGAT. The Extracellular segment spans residues 22–739; it reads GSTECKTYDE…NVFIFRPLHP (718 aa). LRR repeat units follow at residues 66-90, 91-114, 116-138, and 139-162; these read FPNRTVSLILSNNKIQELLNGSFVG, LSSLERLDIKNNIITHIEPGAFYG, FSLKRLDLSKNLIGCLHVDVFKG, and LTNLVKLNLSENKFSSLSQGIFDS. Residues 176 to 223 enclose the LRRCT domain; that stretch reads LLCDCNLQWLVVWIKEKAIGVKETRCSFPRSLQGQLITTLRAETLTCD. In terms of domain architecture, Ig-like spans 229–327; the sequence is PSFQMTPSQH…GNNTRTVHIV (99 aa). Cys-251 and Cys-311 are oxidised to a cystine. 3 LRR repeats span residues 503-529, 574-600, and 611-632; these read LQRIALLRVSNGALAYSTNSPNIALEA, TSNLSALALKNTIVEASLQLPPTLFSS, and VYKLHLLAFRNGKLFPPTGNSS. One can recognise a GAIN-B domain in the interval 563 to 728; sequence PERQLSFKCN…AVLMDLNRTG (166 aa). The segment at 679–728 is GPS; it reads PAFWNFSLQGGQGGWQSDGCRILHQDDNFTTVSCHSLNSYAVLMDLNRTG. A disulfide bond links Cys-698 and Cys-712. The chain crosses the membrane as a helical span at residues 740–760; sequence VIYSTALVLVLCLLSVIVSYI. At 761 to 773 the chain is on the cytoplasmic side; the sequence is YHHKSVRISKKCW. A helical membrane pass occupies residues 774-794; sequence HMLVNLCLHILLTCAVFVGGI. Residues 795–804 lie on the Extracellular side of the membrane; sequence NQTYNASVCQ. The chain crosses the membrane as a helical span at residues 805 to 825; it reads AMGIVLHYSTLATALWSGVTA. Over 826-854 the chain is Cytoplasmic; the sequence is RNIYKQVTRKAKRYEELDEPPPPPRPMLR. A helical membrane pass occupies residues 855–875; it reads FYLIGGGIPIIVCGITAAANI. Over 876–897 the chain is Extracellular; it reads KNYGSQVNAPYCWMAWEPSLGA. The chain crosses the membrane as a helical span at residues 898 to 918; it reads FYGPAAFIVFVDCMYFLSILI. Over 919-977 the chain is Cytoplasmic; it reads QLRRHPERRFELKEQSEEQQHLSVTEATEITPVHLESSPTAQPVPMSALENEHTFVSQL. Residues 978–998 form a helical membrane-spanning segment; it reads MGVAGSLTLYAALWVFGALAI. At 999–1005 the chain is on the extracellular side; sequence SQEHPAD. A helical transmembrane segment spans residues 1006 to 1026; that stretch reads LVFACLFGALALGLGAFLVAH. At 1027–1346 the chain is on the cytoplasmic side; sequence HCVNRQDMRR…TGLWKHETTV (320 aa). A compositionally biased stretch (polar residues) spans 1157 to 1169; the sequence is SVNNNNLPGNANI. Disordered regions lie at residues 1157 to 1188 and 1202 to 1284; these read SVNNNNLPGNANITGHPGRHHKNRSRAHRASR and SVEG…DGSE. Composition is skewed to basic residues over residues 1173–1187 and 1212–1226; these read PGRHHKNRSRAHRAS and NKRHHHESLHARNSR. Residues 1238-1252 show a composition bias toward low complexity; the sequence is QSQLQQDSSDAASTS. Over residues 1266-1280 the composition is skewed to gly residues; sequence IGNGFGHGISNGGLL. The short motif at 1344–1346 is the PDZ-binding element; the sequence is TTV.

It belongs to the G-protein coupled receptor 2 family. Adhesion G-protein coupled receptor (ADGR) subfamily. Interacts (via PDZ-binding motif) with disheveled proteins; leading to the localization of dishevelled proteins to specific membrane subdomains. In terms of tissue distribution, ubiquitously expressed at very low levels.

The protein resides in the cell membrane. In terms of biological role, orphan receptor that acts as a critical modulator of planar cell polarity during gastrulation. Controls the localization of dishevelled. In Danio rerio (Zebrafish), this protein is Adhesion G protein-coupled receptor A3 (adgra3).